The sequence spans 68 residues: Peptide Hp1412 (68 aa).

Positions 1-23 (MKTHFAIFLITLFLFQMFSQSDA) are cleaved as a signal peptide. Position 36 is a cysteine amide (cysteine 36). The propeptide occupies 40–68 (GLSDLYDLDEMFDGEISQADIDFLKELMR).

It belongs to the non-disulfide-bridged peptide (NDBP) superfamily. Short antimicrobial peptide (group 4) family. Expressed by the venom gland.

It is found in the secreted. Its subcellular location is the target cell membrane. Functionally, amphipathic peptide with antimicrobial activity. This chain is Peptide Hp1412, found in Heterometrus petersii (Asian forest scorpion).